The sequence spans 611 residues: DNA mismatch repair protein MutL (611 aa).

This sequence belongs to the DNA mismatch repair MutL/HexB family.

This protein is involved in the repair of mismatches in DNA. It is required for dam-dependent methyl-directed DNA mismatch repair. May act as a 'molecular matchmaker', a protein that promotes the formation of a stable complex between two or more DNA-binding proteins in an ATP-dependent manner without itself being part of a final effector complex. This is DNA mismatch repair protein MutL from Borrelia garinii subsp. bavariensis (strain ATCC BAA-2496 / DSM 23469 / PBi) (Borreliella bavariensis).